We begin with the raw amino-acid sequence, 301 residues long: Probable deoxyhypusine synthase 1 (301 aa).

Lys-269 acts as the Nucleophile in catalysis.

It belongs to the deoxyhypusine synthase family. NAD(+) is required as a cofactor.

The catalysed reaction is [eIF5A protein]-L-lysine + spermidine = [eIF5A protein]-deoxyhypusine + propane-1,3-diamine. It functions in the pathway protein modification; eIF5A hypusination. In terms of biological role, catalyzes the NAD-dependent oxidative cleavage of spermidine and the subsequent transfer of the butylamine moiety of spermidine to the epsilon-amino group of a specific lysine residue of the eIF-5A precursor protein to form the intermediate deoxyhypusine residue. The polypeptide is Probable deoxyhypusine synthase 1 (dys1) (Archaeoglobus fulgidus (strain ATCC 49558 / DSM 4304 / JCM 9628 / NBRC 100126 / VC-16)).